Consider the following 301-residue polypeptide: ATP synthase gamma chain (301 aa).

The protein belongs to the ATPase gamma chain family. F-type ATPases have 2 components, CF(1) - the catalytic core - and CF(0) - the membrane proton channel. CF(1) has five subunits: alpha(3), beta(3), gamma(1), delta(1), epsilon(1). CF(0) has three main subunits: a, b and c.

It localises to the cell inner membrane. Produces ATP from ADP in the presence of a proton gradient across the membrane. The gamma chain is believed to be important in regulating ATPase activity and the flow of protons through the CF(0) complex. This chain is ATP synthase gamma chain, found in Bordetella bronchiseptica (strain ATCC BAA-588 / NCTC 13252 / RB50) (Alcaligenes bronchisepticus).